The primary structure comprises 125 residues: Large ribosomal subunit protein eL32 (125 aa).

Belongs to the eukaryotic ribosomal protein eL32 family.

This Sulfolobus acidocaldarius (strain ATCC 33909 / DSM 639 / JCM 8929 / NBRC 15157 / NCIMB 11770) protein is Large ribosomal subunit protein eL32 (rpl32e).